A 229-amino-acid polypeptide reads, in one-letter code: MYDISGWKHVFKLDPNKELSDEHLEMICESGTDAVIVGGSDGVTIDNVLHMLVSIRRYAVPCVLEVSDVEAITPGFDFYYIPSVLNSRKVEWVTGVHHEALKEFGDIMDWDEIFMEGYCVLNPEAKVAQLTDAKCDVTEDDVIAYARLADKLLRLPIFYLEYSGTYGDVELVKNVKAELKQAKLYYGGGISNAEQAKEMAQYADTVVVGNIIYDDIKAALKTVKAVKGE.

Residue lysine 12 coordinates sn-glycerol 1-phosphate. Mg(2+) contacts are provided by aspartate 14 and serine 40. Sn-glycerol 1-phosphate-binding positions include 159 to 164 (YLEYSG), glycine 189, and 209 to 210 (GN).

The protein belongs to the GGGP/HepGP synthase family. Group I subfamily. Homodimer. Mg(2+) is required as a cofactor.

It catalyses the reaction sn-glycerol 1-phosphate + all-trans-heptaprenyl diphosphate = 3-heptaprenyl-sn-glycero-1-phosphate + diphosphate. The protein operates within membrane lipid metabolism; glycerophospholipid metabolism. Prenyltransferase that catalyzes in vivo the transfer of the heptaprenyl moiety of heptaprenyl pyrophosphate (HepPP; 35 carbon atoms) to the C3 hydroxyl of sn-glycerol-1-phosphate (G1P), producing heptaprenylglyceryl phosphate (HepGP). This reaction is an ether-bond-formation step in the biosynthesis of archaea-type G1P-based membrane lipids found in Bacillales. This Bacillus cereus (strain ZK / E33L) protein is Heptaprenylglyceryl phosphate synthase.